The following is a 431-amino-acid chain: Na(+)-translocating NADH-quinone reductase subunit F (431 aa).

The helical transmembrane segment at 9 to 29 (FICIASLIFCAIGVILAGVIL) threads the bilayer. The region spanning 39–133 (HPCKLKINDN…DMSLEIEERY (95 aa)) is the 2Fe-2S ferredoxin-type domain. [2Fe-2S] cluster is bound by residues Cys-76, Cys-82, Cys-85, and Cys-117. Residues 136-286 (ASSWEGTVIS…SGPYGESFMK (151 aa)) enclose the FAD-binding FR-type domain. A catalytic region spans residues 289–413 (DRPLIFLIGG…PLHNSSILKL (125 aa)).

This sequence belongs to the NqrF family. As to quaternary structure, composed of six subunits; NqrA, NqrB, NqrC, NqrD, NqrE and NqrF. [2Fe-2S] cluster is required as a cofactor. FAD serves as cofactor.

Its subcellular location is the cell inner membrane. It catalyses the reaction a ubiquinone + n Na(+)(in) + NADH + H(+) = a ubiquinol + n Na(+)(out) + NAD(+). In terms of biological role, NQR complex catalyzes the reduction of ubiquinone-1 to ubiquinol by two successive reactions, coupled with the transport of Na(+) ions from the cytoplasm to the periplasm. The first step is catalyzed by NqrF, which accepts electrons from NADH and reduces ubiquinone-1 to ubisemiquinone by a one-electron transfer pathway. The sequence is that of Na(+)-translocating NADH-quinone reductase subunit F from Chlamydia pneumoniae (Chlamydophila pneumoniae).